A 256-amino-acid chain; its full sequence is Ribosomal RNA small subunit methyltransferase A (256 aa).

Asn12, Leu14, Gly39, Glu60, Asp85, and Asn103 together coordinate S-adenosyl-L-methionine.

The protein belongs to the class I-like SAM-binding methyltransferase superfamily. rRNA adenine N(6)-methyltransferase family. RsmA subfamily.

The protein resides in the cytoplasm. The enzyme catalyses adenosine(1518)/adenosine(1519) in 16S rRNA + 4 S-adenosyl-L-methionine = N(6)-dimethyladenosine(1518)/N(6)-dimethyladenosine(1519) in 16S rRNA + 4 S-adenosyl-L-homocysteine + 4 H(+). Specifically dimethylates two adjacent adenosines (A1518 and A1519) in the loop of a conserved hairpin near the 3'-end of 16S rRNA in the 30S particle. May play a critical role in biogenesis of 30S subunits. In Legionella pneumophila (strain Lens), this protein is Ribosomal RNA small subunit methyltransferase A.